A 139-amino-acid chain; its full sequence is Peptide methionine sulfoxide reductase B5 (139 aa).

Ala2 is modified (N-acetylalanine). The region spanning 12 to 133 is the MsrB domain; sequence EEEWRAVLSP…NSVSISFNPA (122 aa). Residues Cys51, Cys54, Cys97, and Cys100 each contribute to the Zn(2+) site. The cysteines at positions 69 and 122 are disulfide-linked. Catalysis depends on Cys122, which acts as the Nucleophile.

This sequence belongs to the MsrB Met sulfoxide reductase family. Zn(2+) serves as cofactor.

The protein resides in the cytoplasm. It localises to the cytosol. It catalyses the reaction L-methionyl-[protein] + [thioredoxin]-disulfide + H2O = L-methionyl-(R)-S-oxide-[protein] + [thioredoxin]-dithiol. Functionally, catalyzes the reduction of methionine sulfoxide (MetSO) to methionine in proteins. Plays a protective role against oxidative stress by restoring activity to proteins that have been inactivated by methionine oxidation. MSRB family specifically reduces the MetSO R-enantiomer. This Arabidopsis thaliana (Mouse-ear cress) protein is Peptide methionine sulfoxide reductase B5 (MSRB5).